Consider the following 239-residue polypeptide: Putative 3-methyladenine DNA glycosylase (239 aa).

The protein belongs to the DNA glycosylase MPG family.

The chain is Putative 3-methyladenine DNA glycosylase from Pseudomonas aeruginosa (strain LESB58).